A 36-amino-acid polypeptide reads, in one-letter code: Alpha-amylase inhibitor AI-3688 (36 aa).

Cys-9 and Cys-25 are joined by a disulfide.

Inhibits mammalian alpha-amylases specifically but has no action on plant and microbial alpha-amylases. This is Alpha-amylase inhibitor AI-3688 from Kitasatospora aureofaciens (Streptomyces aureofaciens).